A 207-amino-acid polypeptide reads, in one-letter code: dTTP/UTP pyrophosphatase (207 aa).

Aspartate 68 (proton acceptor) is an active-site residue.

It belongs to the Maf family. YhdE subfamily. Requires a divalent metal cation as cofactor.

The protein resides in the cytoplasm. The catalysed reaction is dTTP + H2O = dTMP + diphosphate + H(+). It catalyses the reaction UTP + H2O = UMP + diphosphate + H(+). In terms of biological role, nucleoside triphosphate pyrophosphatase that hydrolyzes dTTP and UTP. May have a dual role in cell division arrest and in preventing the incorporation of modified nucleotides into cellular nucleic acids. The chain is dTTP/UTP pyrophosphatase from Staphylothermus marinus (strain ATCC 43588 / DSM 3639 / JCM 9404 / F1).